A 318-amino-acid chain; its full sequence is Solute carrier family 25 member 34 (318 aa).

3 Solcar repeats span residues 18–111 (VSPA…ACQA), 115–208 (QQPG…AKAW), and 218–309 (DSWL…LRKL). Helical transmembrane passes span 21 to 41 (AVDL…TNPL), 59 to 79 (TYPR…RADG), 112 to 134 (GLTQ…GAFV), 184 to 205 (VGAA…FTSA), 220 to 240 (WLAT…VMAP), and 292 to 315 (LGPH…RAQH).

Belongs to the mitochondrial carrier (TC 2.A.29) family.

It localises to the mitochondrion inner membrane. It catalyses the reaction a dicarboxylate(in) + sulfate(out) = a dicarboxylate(out) + sulfate(in). Functionally, putative antiporter that exchanges dicarboxylates and sulfur oxoanions across the inner membrane of mitochondria. This Rattus norvegicus (Rat) protein is Solute carrier family 25 member 34 (Slc25a34).